The primary structure comprises 1299 residues: DNA-directed RNA polymerase subunit beta' (1299 aa).

Cysteine 60, cysteine 62, cysteine 75, and cysteine 78 together coordinate Zn(2+). The interval 188–209 is disordered; it reads GAKSDQKRRAKDGAEKEMGQTR. Mg(2+) is bound by residues aspartate 535, aspartate 537, and aspartate 539. Residues cysteine 882, cysteine 959, cysteine 966, and cysteine 969 each coordinate Zn(2+).

This sequence belongs to the RNA polymerase beta' chain family. The RNAP catalytic core consists of 2 alpha, 1 beta, 1 beta' and 1 omega subunit. When a sigma factor is associated with the core the holoenzyme is formed, which can initiate transcription. Mg(2+) serves as cofactor. Zn(2+) is required as a cofactor.

The enzyme catalyses RNA(n) + a ribonucleoside 5'-triphosphate = RNA(n+1) + diphosphate. Its function is as follows. DNA-dependent RNA polymerase catalyzes the transcription of DNA into RNA using the four ribonucleoside triphosphates as substrates. The chain is DNA-directed RNA polymerase subunit beta' from Clavibacter sepedonicus (Clavibacter michiganensis subsp. sepedonicus).